A 227-amino-acid chain; its full sequence is Uracil-DNA glycosylase (227 aa).

Asp-68 serves as the catalytic Proton acceptor.

It belongs to the uracil-DNA glycosylase (UDG) superfamily. UNG family.

The protein localises to the cytoplasm. The catalysed reaction is Hydrolyzes single-stranded DNA or mismatched double-stranded DNA and polynucleotides, releasing free uracil.. In terms of biological role, excises uracil residues from the DNA which can arise as a result of misincorporation of dUMP residues by DNA polymerase or due to deamination of cytosine. The polypeptide is Uracil-DNA glycosylase (Mycobacterium leprae (strain Br4923)).